The following is a 307-amino-acid chain: D-alanine--D-alanine ligase (307 aa).

The 198-residue stretch at 104-301 (RTAFLAAGLP…FVSLCRWMVE (198 aa)) folds into the ATP-grasp domain. Position 130–183 (130–183 (PLPRPFVIKPANEGSAVGVHILHEGDNRRTEIARSWSFGGQALVEEYIPGRELT)) interacts with ATP. The Mg(2+) site is built by D251, E268, and N270.

It belongs to the D-alanine--D-alanine ligase family. Mg(2+) serves as cofactor. Requires Mn(2+) as cofactor.

It is found in the cytoplasm. The catalysed reaction is 2 D-alanine + ATP = D-alanyl-D-alanine + ADP + phosphate + H(+). It participates in cell wall biogenesis; peptidoglycan biosynthesis. Functionally, cell wall formation. The polypeptide is D-alanine--D-alanine ligase (Granulibacter bethesdensis (strain ATCC BAA-1260 / CGDNIH1)).